We begin with the raw amino-acid sequence, 251 residues long: uncharacterized protein (251 aa).

The first 25 residues, 1-25 (MRKKKFLSRFSFSSLFLLCGTLLSA), serve as a signal peptide directing secretion. Residue cysteine 26 is the site of N-palmitoyl cysteine attachment. Cysteine 26 carries the S-diacylglycerol cysteine lipid modification.

The protein belongs to the MG439/MG440 family.

The protein resides in the cell membrane. This is an uncharacterized protein from Mycoplasma pneumoniae (strain ATCC 29342 / M129 / Subtype 1) (Mycoplasmoides pneumoniae).